Here is a 73-residue protein sequence, read N- to C-terminus: Methionyl-tRNA formyltransferase (73 aa).

The protein belongs to the Fmt family.

It carries out the reaction L-methionyl-tRNA(fMet) + (6R)-10-formyltetrahydrofolate = N-formyl-L-methionyl-tRNA(fMet) + (6S)-5,6,7,8-tetrahydrofolate + H(+). Attaches a formyl group to the free amino group of methionyl-tRNA(fMet). The formyl group appears to play a dual role in the initiator identity of N-formylmethionyl-tRNA by promoting its recognition by IF2 and preventing the misappropriation of this tRNA by the elongation apparatus. The chain is Methionyl-tRNA formyltransferase (fmt) from Rickettsia rickettsii.